The chain runs to 117 residues: Large ribosomal subunit protein uL18 (117 aa).

Belongs to the universal ribosomal protein uL18 family. Part of the 50S ribosomal subunit; part of the 5S rRNA/L5/L18/L25 subcomplex. Contacts the 5S and 23S rRNAs.

Its function is as follows. This is one of the proteins that bind and probably mediate the attachment of the 5S RNA into the large ribosomal subunit, where it forms part of the central protuberance. The protein is Large ribosomal subunit protein uL18 of Aliivibrio salmonicida (strain LFI1238) (Vibrio salmonicida (strain LFI1238)).